We begin with the raw amino-acid sequence, 152 residues long: Ribosomal RNA large subunit methyltransferase H (152 aa).

Residues Leu68, Gly100, and 119–124 (FGPMTW) contribute to the S-adenosyl-L-methionine site.

Belongs to the RNA methyltransferase RlmH family. As to quaternary structure, homodimer.

The protein resides in the cytoplasm. It catalyses the reaction pseudouridine(1915) in 23S rRNA + S-adenosyl-L-methionine = N(3)-methylpseudouridine(1915) in 23S rRNA + S-adenosyl-L-homocysteine + H(+). In terms of biological role, specifically methylates the pseudouridine at position 1915 (m3Psi1915) in 23S rRNA. The sequence is that of Ribosomal RNA large subunit methyltransferase H from Rhodospirillum centenum (strain ATCC 51521 / SW).